The primary structure comprises 436 residues: GTPase Der (436 aa).

2 EngA-type G domains span residues 4–167 (PTIA…PAQE) and 175–351 (IKFS…ESQN). GTP-binding positions include 10-17 (GRPNVGKS), 57-61 (DTGGI), 119-122 (NKVD), 181-188 (GRPNVGKS), 229-233 (DTAGM), and 294-297 (NKWD). The KH-like domain maps to 352 to 436 (TRIPSAVLND…PIHLIARKRK (85 aa)).

This sequence belongs to the TRAFAC class TrmE-Era-EngA-EngB-Septin-like GTPase superfamily. EngA (Der) GTPase family. As to quaternary structure, associates with the 50S ribosomal subunit.

Functionally, GTPase that plays an essential role in the late steps of ribosome biogenesis. This Streptococcus suis (strain 98HAH33) protein is GTPase Der.